Consider the following 318-residue polypeptide: Methionyl-tRNA formyltransferase (318 aa).

113–116 (SLLP) is a binding site for (6S)-5,6,7,8-tetrahydrofolate.

It belongs to the Fmt family.

The catalysed reaction is L-methionyl-tRNA(fMet) + (6R)-10-formyltetrahydrofolate = N-formyl-L-methionyl-tRNA(fMet) + (6S)-5,6,7,8-tetrahydrofolate + H(+). In terms of biological role, attaches a formyl group to the free amino group of methionyl-tRNA(fMet). The formyl group appears to play a dual role in the initiator identity of N-formylmethionyl-tRNA by promoting its recognition by IF2 and preventing the misappropriation of this tRNA by the elongation apparatus. The sequence is that of Methionyl-tRNA formyltransferase from Hahella chejuensis (strain KCTC 2396).